Consider the following 441-residue polypeptide: Endoglucanase E-2 (441 aa).

The tat-type signal signal peptide spans 1–31 (MSPRPLRALLGAAAAALVSAAALAFPSQAAA). Residues 32–320 (NDSPFYVNPN…YEMAIAAGGT (289 aa)) are catalytic. The active site involves aspartate 110. 2 cysteine pairs are disulfide-bonded: cysteine 111-cysteine 156 and cysteine 263-cysteine 298. The active-site Proton donor is the aspartate 148. The active-site Nucleophile is aspartate 296. The tract at residues 317-343 (AGGTNPNPNPNPTPTPTPTPTPPPGSS) is disordered. A linker region spans residues 321-340 (NPNPNPNPTPTPTPTPTPPP). The span at 323–341 (NPNPNPTPTPTPTPTPPPG) shows a compositional bias: pro residues. Residues 339–441 (PPGSSGACTA…SVPTLTCAAS (103 aa)) enclose the CBM2 domain. Cysteine 346 and cysteine 438 form a disulfide bridge.

The protein belongs to the glycosyl hydrolase 6 (cellulase B) family. Homodimer. In terms of processing, predicted to be exported by the Tat system. The position of the signal peptide cleavage has been experimentally proven.

It catalyses the reaction Endohydrolysis of (1-&gt;4)-beta-D-glucosidic linkages in cellulose, lichenin and cereal beta-D-glucans.. The protein operates within glycan metabolism; cellulose degradation. The protein is Endoglucanase E-2 (celB) of Thermobifida fusca (Thermomonospora fusca).